The following is a 495-amino-acid chain: Growth/differentiation factor 5 (495 aa).

Residues 1 to 27 form the signal peptide; sequence MRLPKLLTLLLWHLAWLDLELICTVLG. Residues 28–375 constitute a propeptide that is removed on maturation; it reads APDLGQRTPG…YLFSQRRKRR (348 aa). The interval 30–162 is disordered; sequence DLGQRTPGAK…KEPFRPPPIT (133 aa). Residues 124–137 are compositionally biased toward low complexity; the sequence is GGKASSKAGSAPSS. The segment covering 142–156 has biased composition (basic and acidic residues); the sequence is KTREPGTPREPKEPF. Residue Asn-183 is glycosylated (N-linked (GlcNAc...) asparagine). Cystine bridges form between Cys-394–Cys-460, Cys-423–Cys-492, and Cys-427–Cys-494.

Belongs to the TGF-beta family. As to quaternary structure, homodimer; disulfide-linked. Interacts with serine proteases, HTRA1 and HTRA3. Following LPS binding, may form a complex with CXCR4, HSP90AA1 and HSPA8. Interacts with high affinity with NOG; inhibits chondrogenesis. Interacts with high affinity with BMPR1B and lower affinity with BMPR1A; positively regulates chondrocyte differentiation and induces SMAD-dependent signaling. Interacts with FBN1 (via N-terminal domain) and FBN2. Interacts with TGFBR3.

It is found in the secreted. The protein localises to the cell membrane. Its function is as follows. Growth factor involved in bone and cartilage formation. During cartilage development regulates differentiation of chondrogenic tissue through two pathways. Firstly, positively regulates differentiation of chondrogenic tissue through its binding of high affinity with BMPR1B and of less affinity with BMPR1A, leading to induction of SMAD1-SMAD5-SMAD8 complex phosphorylation and then SMAD protein signaling transduction. Secondly, negatively regulates chondrogenic differentiation through its interaction with NOG. Required to prevent excessive muscle loss upon denervation. This function requires SMAD4 and is mediated by phosphorylated SMAD1/5/8. Binds bacterial lipopolysaccharide (LPS) and mediates LPS-induced inflammatory response, including TNF secretion by monocytes. This is Growth/differentiation factor 5 (Gdf5) from Mus musculus (Mouse).